Reading from the N-terminus, the 70-residue chain is Large ribosomal subunit protein bL28c (70 aa).

Belongs to the bacterial ribosomal protein bL28 family.

Its subcellular location is the plastid. The protein localises to the cyanelle. The polypeptide is Large ribosomal subunit protein bL28c (rpl28) (Cyanophora paradoxa).